Consider the following 101-residue polypeptide: Small ribosomal subunit protein uS14 (101 aa).

This sequence belongs to the universal ribosomal protein uS14 family. As to quaternary structure, part of the 30S ribosomal subunit. Contacts proteins S3 and S10.

Binds 16S rRNA, required for the assembly of 30S particles and may also be responsible for determining the conformation of the 16S rRNA at the A site. This Serratia proteamaculans (strain 568) protein is Small ribosomal subunit protein uS14.